Consider the following 126-residue polypeptide: Histone H2B type 2-B (126 aa).

Residues 1 to 12 (MPDPAKSAPAPK) show a composition bias toward low complexity. A disordered region spans residues 1-36 (MPDPAKSAPAPKKGSKKAVTKVQKKDGKKRKRSRKE). Pro2 bears the N-acetylproline mark. Lys6 carries the N6-(2-hydroxyisobutyryl)lysine; alternate modification. Lys6 is subject to N6-(beta-hydroxybutyryl)lysine; alternate. At Lys6 the chain carries N6-acetyllysine; alternate. Lys6 carries the N6-butyryllysine; alternate modification. Lys6 bears the N6-crotonyllysine; alternate mark. Lys6 carries the post-translational modification N6-lactoyllysine; alternate. Residue Lys6 forms a Glycyl lysine isopeptide (Lys-Gly) (interchain with G-Cter in SUMO2); alternate linkage. Ser7 bears the ADP-ribosylserine mark. Lys12 carries the N6-(beta-hydroxybutyryl)lysine; alternate modification. N6-acetyllysine; alternate occurs at positions 12 and 13. Lys12 and Lys13 each carry N6-crotonyllysine; alternate. At Lys12 the chain carries N6-lactoyllysine; alternate. N6-(2-hydroxyisobutyryl)lysine; alternate is present on Lys13. A Phosphoserine; by STK4/MST1 modification is found at Ser15. N6-acetyllysine; alternate occurs at positions 16, 17, 21, and 24. Residues Lys16, Lys17, Lys21, and Lys24 each carry the N6-crotonyllysine; alternate modification. Residues Lys16, Lys17, Lys21, and Lys24 each carry the N6-lactoyllysine; alternate modification. Lys17 is subject to N6-glutaryllysine; alternate. N6-(2-hydroxyisobutyryl)lysine; alternate occurs at positions 21 and 24. Lys21 is subject to N6-(beta-hydroxybutyryl)lysine; alternate. N6-butyryllysine; alternate is present on Lys21. A Glycyl lysine isopeptide (Lys-Gly) (interchain with G-Cter in SUMO2); alternate cross-link involves residue Lys21. At Lys25 the chain carries N6-(2-hydroxyisobutyryl)lysine. N6-(2-hydroxyisobutyryl)lysine; alternate is present on Lys35. N6-(beta-hydroxybutyryl)lysine; alternate is present on Lys35. N6-crotonyllysine; alternate is present on Lys35. Lys35 carries the post-translational modification N6-glutaryllysine; alternate. Residue Lys35 is modified to N6-succinyllysine; alternate. Lys35 is covalently cross-linked (Glycyl lysine isopeptide (Lys-Gly) (interchain with G-Cter in ubiquitin); alternate). PolyADP-ribosyl glutamic acid is present on Glu36. Ser37 carries the phosphoserine; by AMPK modification. An N6-(2-hydroxyisobutyryl)lysine; alternate mark is found at Lys44, Lys47, and Lys58. Lys44 carries the N6-lactoyllysine; alternate modification. An N6-glutaryllysine; alternate mark is found at Lys44 and Lys47. Lys47 bears the N6-methyllysine; alternate mark. Lys58 carries the N6,N6-dimethyllysine; alternate modification. Arg80 is modified (dimethylated arginine). The residue at position 86 (Lys86) is an N6-(2-hydroxyisobutyryl)lysine; alternate. At Lys86 the chain carries N6-acetyllysine; alternate. Lys86 is subject to N6-lactoyllysine; alternate. Lys86 carries the post-translational modification N6,N6,N6-trimethyllysine; alternate. Omega-N-methylarginine occurs at positions 87 and 93. Position 109 is an N6-(2-hydroxyisobutyryl)lysine; alternate (Lys109). The residue at position 109 (Lys109) is an N6-(beta-hydroxybutyryl)lysine; alternate. Lys109 is modified (N6-lactoyllysine; alternate). Residue Lys109 is modified to N6-glutaryllysine; alternate. At Lys109 the chain carries N6-methyllysine; alternate. O-linked (GlcNAc) serine glycosylation occurs at Ser113. Thr116 is modified (phosphothreonine). Residues Lys117 and Lys121 each carry the N6-(2-hydroxyisobutyryl)lysine; alternate modification. Lys117 is modified (N6-(beta-hydroxybutyryl)lysine; alternate). N6-lactoyllysine; alternate occurs at positions 117 and 121. N6-glutaryllysine; alternate occurs at positions 117 and 121. N6-succinyllysine; alternate occurs at positions 117 and 121. At Lys117 the chain carries N6-methylated lysine; alternate. Lys121 is covalently cross-linked (Glycyl lysine isopeptide (Lys-Gly) (interchain with G-Cter in ubiquitin); alternate).

The protein belongs to the histone H2B family. In terms of assembly, the nucleosome is a histone octamer containing two molecules each of H2A, H2B, H3 and H4 assembled in one H3-H4 heterotetramer and two H2A-H2B heterodimers. The octamer wraps approximately 147 bp of DNA. Monoubiquitination at Lys-35 (H2BK34Ub) by the MSL1/MSL2 dimer is required for histone H3 'Lys-4' (H3K4me) and 'Lys-79' (H3K79me) methylation and transcription activation at specific gene loci, such as HOXA9 and MEIS1 loci. Similarly, monoubiquitination at Lys-121 (H2BK120Ub) by the RNF20/40 complex gives a specific tag for epigenetic transcriptional activation and is also prerequisite for histone H3 'Lys-4' and 'Lys-79' methylation. It also functions cooperatively with the FACT dimer to stimulate elongation by RNA polymerase II. H2BK120Ub also acts as a regulator of mRNA splicing: deubiquitination by USP49 is required for efficient cotranscriptional splicing of a large set of exons. In terms of processing, phosphorylated on Ser-15 (H2BS14ph) by STK4/MST1 during apoptosis; which facilitates apoptotic chromatin condensation. Also phosphorylated on Ser-15 in response to DNA double strand breaks (DSBs), and in correlation with somatic hypermutation and immunoglobulin class-switch recombination. Phosphorylation at Ser-37 (H2BS36ph) by AMPK in response to stress promotes transcription. Post-translationally, glcNAcylation at Ser-113 promotes monoubiquitination of Lys-121. It fluctuates in response to extracellular glucose, and associates with transcribed genes. ADP-ribosylated by PARP1 or PARP2 on Ser-7 (H2BS6ADPr) in response to DNA damage. H2BS6ADPr promotes recruitment of CHD1L. Poly ADP-ribosylation on Glu-36 (H2BE35ADPr) by PARP1 regulates adipogenesis: it inhibits phosphorylation at Ser-37 (H2BS36ph), thereby blocking expression of pro-adipogenetic genes. In terms of processing, crotonylation (Kcr) is specifically present in male germ cells and marks testis-specific genes in post-meiotic cells, including X-linked genes that escape sex chromosome inactivation in haploid cells. Crotonylation marks active promoters and enhancers and confers resistance to transcriptional repressors. It is also associated with post-meiotically activated genes on autosomes. Post-translationally, hydroxybutyrylation of histones is induced by starvation. Lactylated in macrophages by EP300/P300 by using lactoyl-CoA directly derived from endogenous or exogenous lactate, leading to stimulates gene transcription.

Its subcellular location is the nucleus. It is found in the chromosome. In terms of biological role, core component of nucleosome. Nucleosomes wrap and compact DNA into chromatin, limiting DNA accessibility to the cellular machineries which require DNA as a template. Histones thereby play a central role in transcription regulation, DNA repair, DNA replication and chromosomal stability. DNA accessibility is regulated via a complex set of post-translational modifications of histones, also called histone code, and nucleosome remodeling. The polypeptide is Histone H2B type 2-B (Mus musculus (Mouse)).